We begin with the raw amino-acid sequence, 324 residues long: tRNA U34 carboxymethyltransferase (324 aa).

Residues K92, W106, K111, G131, 153-155, 182-183, M197, Y201, and R316 each bind carboxy-S-adenosyl-L-methionine; these read DPT and IE.

This sequence belongs to the class I-like SAM-binding methyltransferase superfamily. CmoB family. As to quaternary structure, homotetramer.

It carries out the reaction carboxy-S-adenosyl-L-methionine + 5-hydroxyuridine(34) in tRNA = 5-carboxymethoxyuridine(34) in tRNA + S-adenosyl-L-homocysteine + H(+). Functionally, catalyzes carboxymethyl transfer from carboxy-S-adenosyl-L-methionine (Cx-SAM) to 5-hydroxyuridine (ho5U) to form 5-carboxymethoxyuridine (cmo5U) at position 34 in tRNAs. The protein is tRNA U34 carboxymethyltransferase of Proteus mirabilis (strain HI4320).